The sequence spans 93 residues: UPF0390 protein C24B10.18 (93 aa).

Positions 1 to 32 (MAQGEFKKKKNSSANKGGRVTKHSKNPKKGAR) are disordered. Residues 19-31 (RVTKHSKNPKKGA) show a composition bias toward basic residues.

The protein belongs to the UPF0390 family.

In Schizosaccharomyces pombe (strain 972 / ATCC 24843) (Fission yeast), this protein is UPF0390 protein C24B10.18.